A 440-amino-acid chain; its full sequence is UDP-N-acetylmuramoylalanine--D-glutamate ligase (440 aa).

Residue 128–134 (GTNGKTT) coordinates ATP.

This sequence belongs to the MurCDEF family.

The protein resides in the cytoplasm. It catalyses the reaction UDP-N-acetyl-alpha-D-muramoyl-L-alanine + D-glutamate + ATP = UDP-N-acetyl-alpha-D-muramoyl-L-alanyl-D-glutamate + ADP + phosphate + H(+). It functions in the pathway cell wall biogenesis; peptidoglycan biosynthesis. In terms of biological role, cell wall formation. Catalyzes the addition of glutamate to the nucleotide precursor UDP-N-acetylmuramoyl-L-alanine (UMA). This is UDP-N-acetylmuramoylalanine--D-glutamate ligase from Lawsonia intracellularis (strain PHE/MN1-00).